Here is an 859-residue protein sequence, read N- to C-terminus: DNA mismatch repair protein MutS (859 aa).

622–629 provides a ligand contact to ATP; sequence GPNMGGKS.

The protein belongs to the DNA mismatch repair MutS family.

Its function is as follows. This protein is involved in the repair of mismatches in DNA. It is possible that it carries out the mismatch recognition step. This protein has a weak ATPase activity. This is DNA mismatch repair protein MutS from Syntrophomonas wolfei subsp. wolfei (strain DSM 2245B / Goettingen).